A 107-amino-acid chain; its full sequence is Ornithine carbamoyltransferase, catabolic (107 aa).

Carbamoyl phosphate contacts are provided by residues Ser-57–Arg-61 and Gln-84.

The protein belongs to the aspartate/ornithine carbamoyltransferase superfamily. OTCase family.

The protein localises to the cytoplasm. The enzyme catalyses carbamoyl phosphate + L-ornithine = L-citrulline + phosphate + H(+). Its pathway is amino-acid degradation; L-arginine degradation via ADI pathway; carbamoyl phosphate from L-arginine: step 2/2. This chain is Ornithine carbamoyltransferase, catabolic (arcB), found in Streptococcus pyogenes.